The primary structure comprises 209 residues: Holliday junction branch migration complex subunit RuvA (209 aa).

Residues 1–70 are domain I; it reads MFSYLKGEAI…EDGTYLYGFA (70 aa). Residues 71 to 149 are domain II; it reads SAAARDLFRQ…QWRDQFSLPD (79 aa). The segment at 149 to 153 is flexible linker; it reads DTAAQ. Positions 154–209 are domain III; the sequence is PNAAVHEDLELTLLALGYQETEIRGAIATLSQDSILLQNDNADEWIRRAITLLSQT.

Belongs to the RuvA family. As to quaternary structure, homotetramer. Forms an RuvA(8)-RuvB(12)-Holliday junction (HJ) complex. HJ DNA is sandwiched between 2 RuvA tetramers; dsDNA enters through RuvA and exits via RuvB. An RuvB hexamer assembles on each DNA strand where it exits the tetramer. Each RuvB hexamer is contacted by two RuvA subunits (via domain III) on 2 adjacent RuvB subunits; this complex drives branch migration. In the full resolvosome a probable DNA-RuvA(4)-RuvB(12)-RuvC(2) complex forms which resolves the HJ.

The protein resides in the cytoplasm. In terms of biological role, the RuvA-RuvB-RuvC complex processes Holliday junction (HJ) DNA during genetic recombination and DNA repair, while the RuvA-RuvB complex plays an important role in the rescue of blocked DNA replication forks via replication fork reversal (RFR). RuvA specifically binds to HJ cruciform DNA, conferring on it an open structure. The RuvB hexamer acts as an ATP-dependent pump, pulling dsDNA into and through the RuvAB complex. HJ branch migration allows RuvC to scan DNA until it finds its consensus sequence, where it cleaves and resolves the cruciform DNA. This Picosynechococcus sp. (strain ATCC 27264 / PCC 7002 / PR-6) (Agmenellum quadruplicatum) protein is Holliday junction branch migration complex subunit RuvA.